A 305-amino-acid polypeptide reads, in one-letter code: Mat- sexual cell fertilization-promoting factor (305 aa).

Positions proline 38–arginine 93 form a DNA-binding region, alpha box.

Belongs to the MATALPHA1 family.

The protein localises to the nucleus. Controls fertilization, probably by determining the mating type. May be involved in the post-fertilization steps of the sexual cycle besides mat+. It is required for the developmental events that occur in the female organ after fertilization. In Podospora anserina (Pleurage anserina), this protein is Mat- sexual cell fertilization-promoting factor (FMR1).